Consider the following 393-residue polypeptide: CCA-adding enzyme (393 aa).

G27 and R30 together coordinate ATP. CTP contacts are provided by G27 and R30. Residues D40 and D42 each contribute to the Mg(2+) site. R111, D154, R157, R160, and R163 together coordinate ATP. The CTP site is built by R111, D154, R157, R160, and R163.

This sequence belongs to the tRNA nucleotidyltransferase/poly(A) polymerase family. Bacterial CCA-adding enzyme type 3 subfamily. As to quaternary structure, homodimer. Mg(2+) serves as cofactor.

The enzyme catalyses a tRNA precursor + 2 CTP + ATP = a tRNA with a 3' CCA end + 3 diphosphate. The catalysed reaction is a tRNA with a 3' CCA end + 2 CTP + ATP = a tRNA with a 3' CCACCA end + 3 diphosphate. In terms of biological role, catalyzes the addition and repair of the essential 3'-terminal CCA sequence in tRNAs without using a nucleic acid template. Adds these three nucleotides in the order of C, C, and A to the tRNA nucleotide-73, using CTP and ATP as substrates and producing inorganic pyrophosphate. tRNA 3'-terminal CCA addition is required both for tRNA processing and repair. Also involved in tRNA surveillance by mediating tandem CCA addition to generate a CCACCA at the 3' terminus of unstable tRNAs. While stable tRNAs receive only 3'-terminal CCA, unstable tRNAs are marked with CCACCA and rapidly degraded. In Listeria monocytogenes serovar 1/2a (strain ATCC BAA-679 / EGD-e), this protein is CCA-adding enzyme.